The sequence spans 376 residues: Chaperone protein DnaJ (376 aa).

The region spanning Asp-5 to Gly-72 is the J domain. The segment at Gly-136–Gln-214 adopts a CR-type zinc-finger fold. Zn(2+) contacts are provided by Cys-149, Cys-152, Cys-166, Cys-169, Cys-188, Cys-191, Cys-202, and Cys-205. CXXCXGXG motif repeat units lie at residues Cys-149–Gly-156, Cys-166–Gly-173, Cys-188–Gly-195, and Cys-202–Gly-209. Disordered stretches follow at residues Asp-227–Pro-246 and Ser-352–Ser-376. Gly residues predominate over residues Gly-237 to Pro-246. Residues Trp-367–Ser-376 are compositionally biased toward basic and acidic residues.

The protein belongs to the DnaJ family. In terms of assembly, homodimer. Requires Zn(2+) as cofactor.

It is found in the cytoplasm. Its function is as follows. Participates actively in the response to hyperosmotic and heat shock by preventing the aggregation of stress-denatured proteins and by disaggregating proteins, also in an autonomous, DnaK-independent fashion. Unfolded proteins bind initially to DnaJ; upon interaction with the DnaJ-bound protein, DnaK hydrolyzes its bound ATP, resulting in the formation of a stable complex. GrpE releases ADP from DnaK; ATP binding to DnaK triggers the release of the substrate protein, thus completing the reaction cycle. Several rounds of ATP-dependent interactions between DnaJ, DnaK and GrpE are required for fully efficient folding. Also involved, together with DnaK and GrpE, in the DNA replication of plasmids through activation of initiation proteins. This is Chaperone protein DnaJ from Acidovorax sp. (strain JS42).